A 217-amino-acid chain; its full sequence is Peroxiredoxin (217 aa).

Residues 2 to 159 form the Thioredoxin domain; it reads VVIGEKFPEV…VVRLVKALQT (158 aa). Residue C46 is the Cysteine sulfenic acid (-SOH) intermediate of the active site. R122 lines the substrate pocket.

It belongs to the peroxiredoxin family. Prx6 subfamily. As to quaternary structure, homodecamer. Pentamer of dimers that assemble into a ring structure.

The protein resides in the cytoplasm. The catalysed reaction is a hydroperoxide + [thioredoxin]-dithiol = an alcohol + [thioredoxin]-disulfide + H2O. Its function is as follows. Thiol-specific peroxidase that catalyzes the reduction of hydrogen peroxide and organic hydroperoxides to water and alcohols, respectively. Plays a role in cell protection against oxidative stress by detoxifying peroxides. The protein is Peroxiredoxin of Methanococcus maripaludis (strain C5 / ATCC BAA-1333).